A 496-amino-acid polypeptide reads, in one-letter code: Maturase K (496 aa).

The protein belongs to the intron maturase 2 family. MatK subfamily.

The protein localises to the plastid. Its subcellular location is the chloroplast. Usually encoded in the trnK tRNA gene intron. Probably assists in splicing its own and other chloroplast group II introns. This chain is Maturase K, found in Paeonia suffruticosa (Tree peony).